Reading from the N-terminus, the 118-residue chain is Large ribosomal subunit protein uL24 (118 aa).

This sequence belongs to the universal ribosomal protein uL24 family. In terms of assembly, part of the 50S ribosomal subunit.

In terms of biological role, one of two assembly initiator proteins, it binds directly to the 5'-end of the 23S rRNA, where it nucleates assembly of the 50S subunit. One of the proteins that surrounds the polypeptide exit tunnel on the outside of the subunit. The polypeptide is Large ribosomal subunit protein uL24 (Prochlorococcus marinus subsp. pastoris (strain CCMP1986 / NIES-2087 / MED4)).